Here is a 469-residue protein sequence, read N- to C-terminus: ATP synthase subunit beta (469 aa).

155-162 is a binding site for ATP; it reads GGAGVGKT.

Belongs to the ATPase alpha/beta chains family. In terms of assembly, F-type ATPases have 2 components, CF(1) - the catalytic core - and CF(0) - the membrane proton channel. CF(1) has five subunits: alpha(3), beta(3), gamma(1), delta(1), epsilon(1). CF(0) has three main subunits: a(1), b(2) and c(9-12). The alpha and beta chains form an alternating ring which encloses part of the gamma chain. CF(1) is attached to CF(0) by a central stalk formed by the gamma and epsilon chains, while a peripheral stalk is formed by the delta and b chains.

Its subcellular location is the cell inner membrane. It carries out the reaction ATP + H2O + 4 H(+)(in) = ADP + phosphate + 5 H(+)(out). Produces ATP from ADP in the presence of a proton gradient across the membrane. The catalytic sites are hosted primarily by the beta subunits. The protein is ATP synthase subunit beta of Helicobacter pylori (strain P12).